Here is a 326-residue protein sequence, read N- to C-terminus: tRNA-modifying protein YgfZ (326 aa).

Positions 27 and 189 each coordinate folate.

It belongs to the tRNA-modifying YgfZ family.

It is found in the cytoplasm. Its function is as follows. Folate-binding protein involved in regulating the level of ATP-DnaA and in the modification of some tRNAs. It is probably a key factor in regulatory networks that act via tRNA modification, such as initiation of chromosomal replication. In Salmonella typhimurium (strain LT2 / SGSC1412 / ATCC 700720), this protein is tRNA-modifying protein YgfZ.